The sequence spans 569 residues: Peroxisomal targeting signal receptor (569 aa).

Cys-9 is covalently cross-linked (Glycyl cysteine thioester (Cys-Gly) (interchain with G-Cter in ubiquitin)). The tract at residues 10-32 is amphipathic helix 1 (AH1); it reads AANANPLAQFFKQSQHDTSLEQS. Lys-21 participates in a covalent cross-link: Glycyl lysine isopeptide (Lys-Gly) (interchain with G-Cter in ubiquitin). The tract at residues 23–42 is disordered; it reads SQHDTSLEQSLRNSAHDTHQ. An amphipathic helix 2 (AH2) region spans residues 57–72; it reads RAHMEQFMNQSTPFNF. 2 consecutive short sequence motifs (wxxxF/Y motif) follow at residues 118–122 and 183–187; these read WSSEF and WEQQF. Residues 218-234 form an amphipathic helix 4 (AH4) region; sequence FDQVWDNIQETYADNML. Residues 243–247 carry the WxxxF/Y motif 3 motif; the sequence is WEKDF. TPR repeat units follow at residues 272 to 305, 306 to 339, 340 to 377, 378 to 415, 416 to 449, 450 to 483, and 484 to 517; these read LDAY…NPGH, VDAW…SPQN, LVAL…VAER, ARNA…ANMD, SEVQ…NPND, ALAW…NPNF, and VRAR…HEVE.

This sequence belongs to the peroxisomal targeting signal receptor family. As to quaternary structure, interacts (via WxxxF/Y and LVxEF motifs) with PEX14; promoting translocation through the PEX13-PEX14 docking complex. Post-translationally, monoubiquitinated at Cys-9 by PEX2 during PEX5 passage through the retrotranslocation channel: monoubiquitination acts as a signal for PEX5 extraction and is required for proper export from peroxisomes and recycling. When PEX5 recycling is compromised, polyubiquitinated at Lys-21 by PEX10 during its passage through the retrotranslocation channel, leading to its degradation.

Its subcellular location is the cytoplasm. It localises to the cytosol. The protein localises to the peroxisome matrix. Receptor that mediates peroxisomal import of proteins containing a C-terminal PTS1-type tripeptide peroxisomal targeting signal (SKL-type). Binds to cargo proteins containing a PTS1 peroxisomal targeting signal in the cytosol, and translocates them into the peroxisome matrix by passing through the PEX13-PEX14 docking complex along with cargo proteins. PEX5 receptor is then retrotranslocated into the cytosol, leading to release of bound cargo in the peroxisome matrix, and reset for a subsequent peroxisome import cycle. This chain is Peroxisomal targeting signal receptor (PEX5), found in Pichia angusta (Yeast).